We begin with the raw amino-acid sequence, 358 residues long: tRNA-specific 2-thiouridylase MnmA (358 aa).

ATP-binding positions include 7–14 (AMSGGVDS) and M33. C102 serves as the catalytic Nucleophile. C102 and C199 are disulfide-bonded. G126 contributes to the ATP binding site. The interaction with tRNA stretch occupies residues 149 to 151 (KDQ). C199 serves as the catalytic Cysteine persulfide intermediate. Residues 305–306 (RY) are interaction with tRNA.

It belongs to the MnmA/TRMU family.

It localises to the cytoplasm. It catalyses the reaction S-sulfanyl-L-cysteinyl-[protein] + uridine(34) in tRNA + AH2 + ATP = 2-thiouridine(34) in tRNA + L-cysteinyl-[protein] + A + AMP + diphosphate + H(+). In terms of biological role, catalyzes the 2-thiolation of uridine at the wobble position (U34) of tRNA, leading to the formation of s(2)U34. This is tRNA-specific 2-thiouridylase MnmA from Halothermothrix orenii (strain H 168 / OCM 544 / DSM 9562).